A 218-amino-acid chain; its full sequence is Trichothecene biosynthesis transcription regulator TRI6 (218 aa).

Positions 154-181 (SQSTNDPGDAGKKGFATRKDRARHEAKH) are disordered. A compositionally biased stretch (basic and acidic residues) spans 162 to 176 (DAGKKGFATRKDRAR). The C2H2-type zinc finger occupies 185 to 215 (IRCQWRDNNGDQCTRTFSRMDNMRDHFRRIH).

The protein localises to the nucleus. Its function is as follows. Transcriptional activator of part of the trichothecene biosynthesis cluster that mediates the production of the antimicrobial trichothecene harzianum A (HA) that plays a role in Botrytis cinerea antagonistic activity and plant defense priming. Regulates expression of both trichothecene and mevalonate pathway genes. In Trichoderma arundinaceum, this protein is Trichothecene biosynthesis transcription regulator TRI6.